The following is a 550-amino-acid chain: Chaperonin GroEL (550 aa).

ATP is bound by residues 29-32 (TAGP), Lys50, 86-90 (DGTTT), Gly417, and Asp499.

This sequence belongs to the chaperonin (HSP60) family. Forms a cylinder of 14 subunits composed of two heptameric rings stacked back-to-back. Interacts with the co-chaperonin GroES.

It is found in the cytoplasm. It catalyses the reaction ATP + H2O + a folded polypeptide = ADP + phosphate + an unfolded polypeptide.. In terms of biological role, together with its co-chaperonin GroES, plays an essential role in assisting protein folding. The GroEL-GroES system forms a nano-cage that allows encapsulation of the non-native substrate proteins and provides a physical environment optimized to promote and accelerate protein folding. The protein is Chaperonin GroEL of Ehrlichia chaffeensis.